Consider the following 399-residue polypeptide: 1-deoxy-D-xylulose 5-phosphate reductoisomerase (399 aa).

T10, G11, S12, I13, and N124 together coordinate NADPH. K125 contacts 1-deoxy-D-xylulose 5-phosphate. E126 contacts NADPH. Residue D150 participates in Mn(2+) binding. 1-deoxy-D-xylulose 5-phosphate contacts are provided by S151, E152, S186, and H209. Position 152 (E152) interacts with Mn(2+). Residue G215 participates in NADPH binding. The 1-deoxy-D-xylulose 5-phosphate site is built by S222, N227, K228, and E231. Mn(2+) is bound at residue E231.

This sequence belongs to the DXR family. It depends on Mg(2+) as a cofactor. Mn(2+) is required as a cofactor.

It carries out the reaction 2-C-methyl-D-erythritol 4-phosphate + NADP(+) = 1-deoxy-D-xylulose 5-phosphate + NADPH + H(+). The protein operates within isoprenoid biosynthesis; isopentenyl diphosphate biosynthesis via DXP pathway; isopentenyl diphosphate from 1-deoxy-D-xylulose 5-phosphate: step 1/6. Its function is as follows. Catalyzes the NADPH-dependent rearrangement and reduction of 1-deoxy-D-xylulose-5-phosphate (DXP) to 2-C-methyl-D-erythritol 4-phosphate (MEP). This chain is 1-deoxy-D-xylulose 5-phosphate reductoisomerase, found in Psychromonas ingrahamii (strain DSM 17664 / CCUG 51855 / 37).